The chain runs to 403 residues: DNA polymerase IV (403 aa).

Residues 23 to 203 (IAHMDCDAFY…KPVNILPGVG (181 aa)) form the UmuC domain. Positions 27 and 120 each coordinate Mg(2+). The active site involves Glu121.

The protein belongs to the DNA polymerase type-Y family. Monomer. Mg(2+) serves as cofactor.

The protein resides in the cytoplasm. The catalysed reaction is DNA(n) + a 2'-deoxyribonucleoside 5'-triphosphate = DNA(n+1) + diphosphate. In terms of biological role, poorly processive, error-prone DNA polymerase involved in untargeted mutagenesis. Copies undamaged DNA at stalled replication forks, which arise in vivo from mismatched or misaligned primer ends. These misaligned primers can be extended by PolIV. Exhibits no 3'-5' exonuclease (proofreading) activity. May be involved in translesional synthesis, in conjunction with the beta clamp from PolIII. This Caulobacter vibrioides (strain ATCC 19089 / CIP 103742 / CB 15) (Caulobacter crescentus) protein is DNA polymerase IV.